Reading from the N-terminus, the 470-residue chain is Cholesterol 7-desaturase nvd 1 (470 aa).

Residues 67–87 (LALCIAGFSVLMYFLYVLVFV) traverse the membrane as a helical segment. The Rieske domain maps to 136 to 238 (FRLVDSQQLE…CREVNKAIFV (103 aa)). [2Fe-2S] cluster is bound by residues Cys-176, His-178, Cys-196, and His-199.

This sequence belongs to the cholesterol 7-desaturase family. [2Fe-2S] cluster serves as cofactor.

The protein localises to the membrane. It catalyses the reaction cholesterol + NADPH + O2 + H(+) = 7-dehydrocholesterol + NADP(+) + 2 H2O. The enzyme catalyses cholesterol + NADH + O2 + H(+) = 7-dehydrocholesterol + NAD(+) + 2 H2O. The protein operates within steroid hormone biosynthesis; dafachronic acid biosynthesis. In terms of biological role, catalyzes the production of 7-dehydrocholesterol (7-DHC or cholesta-5,7-dien-3beta-ol) by inserting a double bond (desaturating) at the C7-C8 single bond of cholesterol. Essential regulator of steroid biosynthesis as this reaction is the first step in the synthesis of the steroid hormone Delta(7)-dafachronic acid. This chain is Cholesterol 7-desaturase nvd 1, found in Ciona intestinalis (Transparent sea squirt).